The following is a 143-amino-acid chain: Zinc-containing ferredoxin (143 aa).

An N-terminal extension region spans residues 13–60 (PIDEHFLENDKDYPVTGQHNGHDVRAEGMQRLDADGKPYPTKLGIHGT). Positions 31, 34, and 58 each coordinate Zn(2+). 2 consecutive 4Fe-4S ferredoxin-type domains span residues 60 to 89 (THVAVDWDCCIADGACMDVCPVNLYEWNLN) and 115 to 143 (KCDPVRESDCIFCMACESVCPVRAIKITP). [3Fe-4S] cluster-binding residues include C69 and C75. [4Fe-4S] cluster is bound at residue C79. D117 contributes to the Zn(2+) binding site. Residues C124, C127, and C130 each contribute to the [4Fe-4S] cluster site. Residue C134 coordinates [3Fe-4S] cluster.

The cofactor is [3Fe-4S] cluster. Requires [4Fe-4S] cluster as cofactor. Zn(2+) is required as a cofactor.

Ferredoxins are iron-sulfur proteins that transfer electrons in a wide variety of metabolic reactions. This is Zinc-containing ferredoxin (zfx) from Thermoplasma acidophilum (strain ATCC 25905 / DSM 1728 / JCM 9062 / NBRC 15155 / AMRC-C165).